A 238-amino-acid chain; its full sequence is uncharacterized protein (238 aa).

Residues 1-10 are compositionally biased toward basic residues; the sequence is MARGQNIRKR. Disordered regions lie at residues 1–26 and 195–238; these read MARG…IGIH and LNTS…YDSF.

The protein belongs to the asfivirus DP238L family.

This is an uncharacterized protein from Ornithodoros (relapsing fever ticks).